Here is an 808-residue protein sequence, read N- to C-terminus: Sucrose synthase 4 (808 aa).

Residues 277 to 754 (MVFNVVILSP…GLERIQEKYT (478 aa)) form a GT-B glycosyltransferase region.

Belongs to the glycosyltransferase 1 family. Plant sucrose synthase subfamily. Detected in the whole plant with highest expression in young rosette leaves and roots.

It carries out the reaction an NDP-alpha-D-glucose + D-fructose = a ribonucleoside 5'-diphosphate + sucrose + H(+). In terms of biological role, sucrose-cleaving enzyme that provides UDP-glucose and fructose for various metabolic pathways. This Arabidopsis thaliana (Mouse-ear cress) protein is Sucrose synthase 4 (SUS4).